Consider the following 470-residue polypeptide: Glutamyl-tRNA(Gln) amidotransferase subunit A (470 aa).

Catalysis depends on charge relay system residues lysine 71 and serine 146. The active-site Acyl-ester intermediate is serine 170.

The protein belongs to the amidase family. GatA subfamily. As to quaternary structure, heterotrimer of A, B and C subunits.

It catalyses the reaction L-glutamyl-tRNA(Gln) + L-glutamine + ATP + H2O = L-glutaminyl-tRNA(Gln) + L-glutamate + ADP + phosphate + H(+). Functionally, allows the formation of correctly charged Gln-tRNA(Gln) through the transamidation of misacylated Glu-tRNA(Gln) in organisms which lack glutaminyl-tRNA synthetase. The reaction takes place in the presence of glutamine and ATP through an activated gamma-phospho-Glu-tRNA(Gln). In Akkermansia muciniphila (strain ATCC BAA-835 / DSM 22959 / JCM 33894 / BCRC 81048 / CCUG 64013 / CIP 107961 / Muc), this protein is Glutamyl-tRNA(Gln) amidotransferase subunit A.